The following is a 100-amino-acid chain: Urease subunit gamma (100 aa).

This sequence belongs to the urease gamma subunit family. Heterotrimer of UreA (gamma), UreB (beta) and UreC (alpha) subunits. Three heterotrimers associate to form the active enzyme.

It is found in the cytoplasm. It carries out the reaction urea + 2 H2O + H(+) = hydrogencarbonate + 2 NH4(+). The protein operates within nitrogen metabolism; urea degradation; CO(2) and NH(3) from urea (urease route): step 1/1. This chain is Urease subunit gamma, found in Acinetobacter baylyi (strain ATCC 33305 / BD413 / ADP1).